The chain runs to 235 residues: Hydroxyacylglutathione hydrolase (235 aa).

Zn(2+) contacts are provided by histidine 53, histidine 55, aspartate 57, histidine 58, histidine 109, aspartate 127, and histidine 165.

This sequence belongs to the metallo-beta-lactamase superfamily. Glyoxalase II family. In terms of assembly, monomer. It depends on Zn(2+) as a cofactor.

The enzyme catalyses an S-(2-hydroxyacyl)glutathione + H2O = a 2-hydroxy carboxylate + glutathione + H(+). Its pathway is secondary metabolite metabolism; methylglyoxal degradation; (R)-lactate from methylglyoxal: step 2/2. Functionally, thiolesterase that catalyzes the hydrolysis of S-D-lactoyl-glutathione to form glutathione and D-lactic acid. The polypeptide is Hydroxyacylglutathione hydrolase (Haemophilus ducreyi (strain 35000HP / ATCC 700724)).